Here is a 583-residue protein sequence, read N- to C-terminus: Phosphoglucomutase, cytoplasmic (583 aa).

Positions 1-20 are disordered; that stretch reads MATFKVSRVETKPYDGQKPG. Alpha-D-glucose 1,6-bisphosphate-binding residues include Arg25 and Ser124. The active-site Phosphoserine intermediate is the Ser124. Residues Ser124, Asp300, Asp302, and Asp304 each contribute to the Mg(2+) site. Ser124 is subject to Phosphoserine. Residues Asp304, Arg305, Thr368, Glu387, Ser389, and Lys400 each contribute to the alpha-D-glucose 1,6-bisphosphate site.

The protein belongs to the phosphohexose mutase family. Monomer. Requires Mg(2+) as cofactor.

Its subcellular location is the cytoplasm. The catalysed reaction is alpha-D-glucose 1-phosphate = alpha-D-glucose 6-phosphate. The enzyme catalyses O-phospho-L-seryl-[protein] + alpha-D-glucose 1-phosphate = alpha-D-glucose 1,6-bisphosphate + L-seryl-[protein]. It carries out the reaction alpha-D-glucose 1,6-bisphosphate + L-seryl-[protein] = O-phospho-L-seryl-[protein] + alpha-D-glucose 6-phosphate. Catalyzes the reversible isomerization of alpha-D-glucose 1-phosphate to alpha-D-glucose 6-phosphate. The mechanism proceeds via the intermediate compound alpha-D-glucose 1,6-bisphosphate. This enzyme participates in both the breakdown and synthesis of glucose. The sequence is that of Phosphoglucomutase, cytoplasmic (PGM1) from Mesembryanthemum crystallinum (Common ice plant).